The sequence spans 364 residues: DNA replication and repair protein RecF (364 aa).

30 to 37 provides a ligand contact to ATP; sequence GLNAQGKS.

The protein belongs to the RecF family.

Its subcellular location is the cytoplasm. Its function is as follows. The RecF protein is involved in DNA metabolism; it is required for DNA replication and normal SOS inducibility. RecF binds preferentially to single-stranded, linear DNA. It also seems to bind ATP. The sequence is that of DNA replication and repair protein RecF from Caldanaerobacter subterraneus subsp. tengcongensis (strain DSM 15242 / JCM 11007 / NBRC 100824 / MB4) (Thermoanaerobacter tengcongensis).